We begin with the raw amino-acid sequence, 324 residues long: Ribosomal RNA small subunit methyltransferase H (324 aa).

S-adenosyl-L-methionine-binding positions include 41–43 (GGH), aspartate 60, tyrosine 87, aspartate 111, and glutamine 118.

This sequence belongs to the methyltransferase superfamily. RsmH family.

It localises to the cytoplasm. It catalyses the reaction cytidine(1402) in 16S rRNA + S-adenosyl-L-methionine = N(4)-methylcytidine(1402) in 16S rRNA + S-adenosyl-L-homocysteine + H(+). Its function is as follows. Specifically methylates the N4 position of cytidine in position 1402 (C1402) of 16S rRNA. In Nocardia farcinica (strain IFM 10152), this protein is Ribosomal RNA small subunit methyltransferase H.